Here is a 639-residue protein sequence, read N- to C-terminus: MSEPIEWLEDGTPYSPRFSDRYHSEHGGLEQARGTFLAGCGLPQAWQNQPQWRVLETGFGLGLNFLVTWAAWRADPHRPQRLHFVSCEAWPVSAADLLRAAPIDSTLQSLAQQLAAQYWGLLPGVHRLSFDGGQVLLTLYIGDAQALLRQQQPTADSVYLDGFDPQHNPQMWDIHTLKAVARCCRRGTRLATWTVARGVRDGLVQCGFEVQKVPGVRPKRDNLQATYAPRWEPRAGQPVLPDATVAAPARCLVVGAGLAGAAVAASLAHRGWQVQVLDRADHPAAGASGLPAGVFAPNVSQDDNLISRLSRAGVRITLNTLAQLPAETRGTDWSACGTLEHRVDGTTGLAWSDGPGLDWSRPATPAQLQANGLSADTVACWHEHAGWVRPPQLIAHLLNDPAIRWRGSAAVAELRRTTVDGQPLWQALDAEGHVLAEAELAVVCAGHHTGPLTHAHWPMNPLRGQLAWGLHAQAPAGAPWPPQPLNGNGNLVPRVPLQDGAGWVLGSTFERLKTALPPSPDDHAKGLATNQAKLHALLPPLGAAMDAAFSQAATAPDGPVRTWAAVRCGALDRRPIVGPVDSVRQPGLWLCTAMGARGLTLSLLCGELIAARLHSEPLPLDAPLARALSSERWLGYEPQ.

The tRNA (mnm(5)s(2)U34)-methyltransferase stretch occupies residues 1-228 (MSEPIEWLED…KRDNLQATYA (228 aa)). Residues 254–639 (VGAGLAGAAV…SERWLGYEPQ (386 aa)) form an FAD-dependent cmnm(5)s(2)U34 oxidoreductase region.

It in the N-terminal section; belongs to the methyltransferase superfamily. tRNA (mnm(5)s(2)U34)-methyltransferase family. This sequence in the C-terminal section; belongs to the DAO family. The cofactor is FAD.

The protein localises to the cytoplasm. The catalysed reaction is 5-aminomethyl-2-thiouridine(34) in tRNA + S-adenosyl-L-methionine = 5-methylaminomethyl-2-thiouridine(34) in tRNA + S-adenosyl-L-homocysteine + H(+). Catalyzes the last two steps in the biosynthesis of 5-methylaminomethyl-2-thiouridine (mnm(5)s(2)U) at the wobble position (U34) in tRNA. Catalyzes the FAD-dependent demodification of cmnm(5)s(2)U34 to nm(5)s(2)U34, followed by the transfer of a methyl group from S-adenosyl-L-methionine to nm(5)s(2)U34, to form mnm(5)s(2)U34. The polypeptide is tRNA 5-methylaminomethyl-2-thiouridine biosynthesis bifunctional protein MnmC (Acidovorax sp. (strain JS42)).